We begin with the raw amino-acid sequence, 115 residues long: NADH-ubiquinone oxidoreductase chain 3 (115 aa).

3 consecutive transmembrane segments (helical) span residues 3 to 23, 55 to 75, and 84 to 104; these read LMIT…IAFW, FFLV…LLPL, and LNTM…SLAY.

It belongs to the complex I subunit 3 family. In terms of assembly, core subunit of respiratory chain NADH dehydrogenase (Complex I) which is composed of 45 different subunits. Interacts with TMEM186. Interacts with TMEM242.

It is found in the mitochondrion inner membrane. It catalyses the reaction a ubiquinone + NADH + 5 H(+)(in) = a ubiquinol + NAD(+) + 4 H(+)(out). Core subunit of the mitochondrial membrane respiratory chain NADH dehydrogenase (Complex I) which catalyzes electron transfer from NADH through the respiratory chain, using ubiquinone as an electron acceptor. Essential for the catalytic activity of complex I. The chain is NADH-ubiquinone oxidoreductase chain 3 from Ovis aries (Sheep).